Here is a 142-residue protein sequence, read N- to C-terminus: Phenylalanine ammonia-lyase (142 aa).

3 residues coordinate (E)-cinnamate: lysine 66, glutamate 94, and asparagine 97.

The protein belongs to the PAL/histidase family. As to quaternary structure, homotetramer. Contains an active site 4-methylidene-imidazol-5-one (MIO), which is formed autocatalytically by cyclization and dehydration of residues Ala-Ser-Gly.

Its subcellular location is the cytoplasm. The enzyme catalyses L-phenylalanine = (E)-cinnamate + NH4(+). Its pathway is phenylpropanoid metabolism; trans-cinnamate biosynthesis; trans-cinnamate from L-phenylalanine: step 1/1. Functionally, catalyzes the non-oxidative deamination of L-phenylalanine to form trans-cinnamic acid and a free ammonium ion. Facilitates the commitment step in phenylpropanoid pathways that produce secondary metabolites such as lignins, coumarins and flavonoids. The chain is Phenylalanine ammonia-lyase (palA) from Agaricus bisporus (White button mushroom).